The primary structure comprises 106 residues: UPF0145 protein PP_2873 (106 aa).

It belongs to the UPF0145 family.

The sequence is that of UPF0145 protein PP_2873 from Pseudomonas putida (strain ATCC 47054 / DSM 6125 / CFBP 8728 / NCIMB 11950 / KT2440).